A 212-amino-acid chain; its full sequence is Shuttling pre-60S factor ECM1 (212 aa).

2 disordered regions span residues 28–48 (KISK…EVKD) and 188–212 (SLAE…DVEE). Position 188 is a phosphoserine (S188). The segment covering 191–201 (EDNTVQKTPTN) has biased composition (polar residues).

This sequence belongs to the ECM1 family. In terms of assembly, associates with the pre-60S ribosomal particle and the nucleopore complex.

Its subcellular location is the nucleus. The protein localises to the nucleolus. It localises to the cytoplasm. Pre-ribosomal factor involved in 60S ribosomal protein subunit export from the nucleus. The polypeptide is Shuttling pre-60S factor ECM1 (ECM1) (Saccharomyces cerevisiae (strain ATCC 204508 / S288c) (Baker's yeast)).